A 313-amino-acid chain; its full sequence is Aspartate carbamoyltransferase catalytic subunit (313 aa).

The carbamoyl phosphate site is built by Arg-58 and Thr-59. Residue Lys-86 coordinates L-aspartate. The carbamoyl phosphate site is built by Arg-108, His-136, and Gln-139. 2 residues coordinate L-aspartate: Arg-169 and Arg-224. Positions 265 and 266 each coordinate carbamoyl phosphate.

The protein belongs to the aspartate/ornithine carbamoyltransferase superfamily. ATCase family. As to quaternary structure, heterododecamer (2C3:3R2) of six catalytic PyrB chains organized as two trimers (C3), and six regulatory PyrI chains organized as three dimers (R2).

It carries out the reaction carbamoyl phosphate + L-aspartate = N-carbamoyl-L-aspartate + phosphate + H(+). It participates in pyrimidine metabolism; UMP biosynthesis via de novo pathway; (S)-dihydroorotate from bicarbonate: step 2/3. Its function is as follows. Catalyzes the condensation of carbamoyl phosphate and aspartate to form carbamoyl aspartate and inorganic phosphate, the committed step in the de novo pyrimidine nucleotide biosynthesis pathway. This chain is Aspartate carbamoyltransferase catalytic subunit, found in Natranaerobius thermophilus (strain ATCC BAA-1301 / DSM 18059 / JW/NM-WN-LF).